Consider the following 258-residue polypeptide: Imidazole glycerol phosphate synthase subunit HisF (258 aa).

Active-site residues include D12 and D131.

This sequence belongs to the HisA/HisF family. As to quaternary structure, heterodimer of HisH and HisF.

The protein resides in the cytoplasm. It catalyses the reaction 5-[(5-phospho-1-deoxy-D-ribulos-1-ylimino)methylamino]-1-(5-phospho-beta-D-ribosyl)imidazole-4-carboxamide + L-glutamine = D-erythro-1-(imidazol-4-yl)glycerol 3-phosphate + 5-amino-1-(5-phospho-beta-D-ribosyl)imidazole-4-carboxamide + L-glutamate + H(+). It functions in the pathway amino-acid biosynthesis; L-histidine biosynthesis; L-histidine from 5-phospho-alpha-D-ribose 1-diphosphate: step 5/9. In terms of biological role, IGPS catalyzes the conversion of PRFAR and glutamine to IGP, AICAR and glutamate. The HisF subunit catalyzes the cyclization activity that produces IGP and AICAR from PRFAR using the ammonia provided by the HisH subunit. This chain is Imidazole glycerol phosphate synthase subunit HisF, found in Sinorhizobium medicae (strain WSM419) (Ensifer medicae).